A 545-amino-acid chain; its full sequence is Hydroxylamine reductase (545 aa).

The [4Fe-4S] cluster site is built by Cys-3, Cys-6, Cys-15, and Cys-21. Positions 241, 265, 309, 396, 424, 449, 483, and 485 each coordinate hybrid [4Fe-2O-2S] cluster. Cys-396 is modified (cysteine persulfide).

Belongs to the HCP family. It depends on [4Fe-4S] cluster as a cofactor. The cofactor is hybrid [4Fe-2O-2S] cluster.

Its subcellular location is the cytoplasm. It carries out the reaction A + NH4(+) + H2O = hydroxylamine + AH2 + H(+). Functionally, catalyzes the reduction of hydroxylamine to form NH(3) and H(2)O. The chain is Hydroxylamine reductase from Zymomonas mobilis subsp. mobilis (strain ATCC 31821 / ZM4 / CP4).